Reading from the N-terminus, the 533-residue chain is Monogalactosyldiacylglycerol synthase 1, chloroplastic (533 aa).

Residues histidine 155 and proline 189 each coordinate a 1,2-diacyl-sn-glycero-3-phospho-(1'-sn-glycerol). Histidine 155 contributes to the UDP binding site. Residues 192–215 (QLPRSYNFLVKHGTLWKMTYYGTS) are required for binding to diacyl glycerol. Residues arginine 324, phenylalanine 413, isoleucine 414, 434 to 438 (GTIAE), and glutamate 456 each bind UDP.

Belongs to the glycosyltransferase 28 family. In terms of assembly, homodimer. In terms of tissue distribution, expressed in roots, stems, leaves, flowers, siliques and seeds.

Its subcellular location is the plastid. The protein resides in the chloroplast inner membrane. The catalysed reaction is a 1,2-diacyl-sn-glycerol + UDP-alpha-D-galactose = a 1,2-diacyl-3-O-(beta-D-galactosyl)-sn-glycerol + UDP + H(+). It carries out the reaction 1,2-di-(9Z,12Z-octadecadienoyl)-sn-glycerol + UDP-alpha-D-galactose = 1,2-di-(9Z,12Z-octadecadienoyl)-3-beta-D-galactosyl-sn-glycerol + UDP + H(+). The enzyme catalyses 1-(9Z-octadecenoyl)-2-hexadecanoyl-sn-glycerol + UDP-alpha-D-galactose = 1-(9Z-octadecenoyl)-2-hexadecanoyl-3-beta-D-galactosyl-sn-glycerol + UDP + H(+). It catalyses the reaction 1,2-di-(9Z-octadecenoyl)-sn-glycerol + UDP-alpha-D-galactose = 1,2-di-(9Z-octadecenoyl)-3-beta-D-galactosyl-sn-glycerol + UDP + H(+). Activated by phosphatidate (PA) and phosphatidylglycerol (PG). Inhibited by galvestine-1. Involved in the synthesis of the major structural component of photosynthetic membranes. Required for proper thylakoid membrane biogenesis. Does not discriminate between prokaryotic (18:1/16:0) or eukaryotic (18:2/18:2) 1,2-diacylglycerol species, but operates with some preference for the prokaryotic one. Is responsible for most galactolipid synthesis in chloroplasts. Required for the formation of thylakoid membranes and functional photosynthetic electron transport during cotyledons greening in young seedlings. May link galactolipid synthesis with the coordinated transcriptional regulation of chloroplasts and other organelles during cotyledon greening. This chain is Monogalactosyldiacylglycerol synthase 1, chloroplastic, found in Arabidopsis thaliana (Mouse-ear cress).